The following is a 3033-amino-acid chain: MSTNPKPQRKTKRNTNRRPQDVKFPGGGQIVGGVYLLPRRGPRLGVRATRKTSERSQPRGRRQPIPKDRRSAGKSWGRPGYPWPLYGNEGLGWAGWLLSPRGSRPSWGPTDPRHRSRNLGKVIDTLTCGFADLMGYIPVVGAPVGGVARALAHGVRVLEDGINYATGNLPGCSFSIFLLALLSCMSVPVSAVEVKNTSQIYMATNDCSNNSITWQLEGAVLHVPGCVPCESTGNISRCWIPVTPNVAVRERGALTKGLRTHIDLIVVSATFCSALYIGDVCGAIMIAAQATIISPQHHTFVQDCNCSIYPGHVTGHRMAWDMMMNWSPATTMIMAYFMRVPEVVLDIITGAHWGVMFGLAYFSMQGAWAKVVVILLLTAGVDAQTHTISGHAARTTHGLVSLFTPGSQQNIQLVNTNGSWHINRTALNCNDSLKTGFIAALFYSHKFNSSGCPQRMSSCRSIEEFRIGWGNLEYEENVTNDDNMRPYCWHYPPRPCGIVPAQTVCGPVYCFTPSPVVVGTTDRRGVPTYTWGENDTDVFLLNSTRPPRGAWFGCTWMNSTGFTKTCGAPPCRIRPDFNSSEDLLCPTDCFRKHSEATYTRCGAGPWLTPKCLFHYPYRLWHYPCTINFTIHKIRMFIGGVEHRLEAACNFTRGDRCNLEDRDRSQLSPLLHSTTEWAILPCTFSDMPALSTGLLHLHQNIVDVQYLYGLSPAITKYIVKWEWVVLLFLLLADARVCACLWMLLLLGQAEAALEKLVILHAASAASSHGMLCFIIFFIAAWYIKGRVTPLVTYSYLGMWSFSLLLLALPQQAYALDTTEQGQIGLVLLVVISVFTLSPAYKILLCRSLWWLSYLLVRAEALIQDWVPPWQARGGRDGIIWAATIFCPGVLFDITNWLLAILGPGYLLRSVLTSTPYFVRAQALLRICAAVRHLSGGKYVQMMLLTLGKWTGTYIYDHLSPMSGWAASGLRDLAVAVEPIVFSPMEKKVIVWGAETAACGDILHGLPVSARLGQEVLLGPADEYTSKGWKLLAPITAYAQQTRGLLGTIVVSMTGRDKTEQAGEIQVLSTVTQSFLGTTISGILWTVFHGAGNKTLAGSRGPVTQMYSSAEGDLVGWPSPPGTRSLDPCTCGAVDLYLVTRNADVIPARRQGDRRGALLSPRPLSSLKGSSGGPVLCPRGHAVGIFRAAICTRGAAKSIDFIPIESLDVIIRSPNFTDNSSPPAVPQTYQVGYLHAPTGSGKSTKVPASYAAQGYKVLVLNPSVAATLGFGAYMSKAHGINPNIRTGVRTVTTGESITYSTYGKFLADGGCSGGAYDVIICDECHSVDATTILGIGTVLDQAETAGARLTVLATATPPGSVTTPHPNIEEVALGHEGEIPFYGKAIPLSQIKGGRHLIFCHSKKKCDELAAALRGMGLNAVAYYRGLDVSVIPTQGDVVVVATDALMTGFTGDFDSVVDCNVAVTQTVDFSLDPTFTVTTQTVPQDAVSRSQRRGRTGRGRLGIYRYVSSGERASGMFDSVVLCECYDAGAAWYELTPAETTVRLRAYFNTPGLPVCQDHLEFWEAVFTGLTHIDAHFLSQTKQAGENFPYLVAYQATVCARAKAPPPSWDVMWKCLIRLKPTLTGPTPLLYRLGPVTNETTLTHPVTKYIATCMQADLEIMTSTWVLAGGVLAAIAAYCLATGCVVCIGRVNINQKTIVAPDKEVLYEAFDEMEECASRALLLEEGQRIAEMLKSKIQGLLQQATKQAQDIQPAVQATWPKLEQFWAKHMWNFISGIQYLAGLSTLPGNPAVAAMMAFSAALTSPLPTSTTILLNIMGGWLASQIAPAAGATGFVVSGLVGAAVGSIGLGKILVDVLAGYGAGISGALVAFKIMSGEKPSVEDVVNLLPGILSPGALVVGVICAAILRRHVGQGEGAVQWMNRLIAFASRGNHVAPTHYVAESDASQRVTQLLGSLTITSLLRRLHTWITEDCPVPCAGSWLRDIWDWACTILTDFKNWLSTKLLPKMPGLPFISCQRGHKGAWTGTGIMTTRCPCGAVVSGNVRHGSMRITGPKTCMNTWQGTFPINCYTEGQCAPQPTHNYKTAIWKVAAAEYAEVTRHGSYAYVTGLTNDNLKVPCQLPAPEFFSWVDGVQIHRFAPTPKPFIRDEVSFTVGLNSFVVGSQLPCEPEPDTEVLASMLTDPSHITAEAAARRLARGSPPSEASSSASQLSAPSLRATCTAHAKNYAVEMVDANFFMGSDVTRIESETKVLILDSLDPSVEEEDEREPSVPSEYLLPKKKFPQALPVWARPDYNPPVVETWKRPDYDPPTVSGCALPPRVTAPTPPPRRRRALVLSQSNVGEALQALAIKSFGQLPPSCDSGRSTGMDTTDATDQPALKESTDSEAGSDSSMPPLEGEPGDPDLESGSVEYHPSSQEGEAAPDLDSGSWSTCSEEGGSEVCCSMSYSWTGALITPCGPEEEKLPINPLSNSLLRYHNKVYSTTSRSASQRAKKVTFDRVQLLDSHYDQVLKDIKLAASKVSANLLSIEEACALTPPHSARSKYGFGAKEVRSLSRKAVDHIKSVWKDLLEDQQTPIPTTIMAKNEVFCIDPTKGGKKAARLIVFPDLGVRVCEKMALYDITQKLPQAVMGASYGFQYSPAQRVDFLLRAWKEKKDPMGFSYDTRCFDSTVTERDIRTEESIYLACSLPEEARVAIHSLTERLYVGGPMMNSKGQSCGYRRCRASGVLTTSMGNTITCYVKALAACKAAGIVAPTMLVCGDDLVVISESQGAEEDERNLRVFTEAMTRYSAPPGDPPKPEYDLELITSCSSNVSVALDQHGRRMYYLTRDPSTPLARAAWETARHSPVNSWLGNIIQYAPTIWVRMVLMTHFFSVLMAQETLDQDLNFEMYGAVYSVNPLDLPAIIERLHGLEAFSLHGYSPTELTRVAAALRKLGAPPLRAWKSRARAVRASLISQGGRAATCGFYLFNWAVRTKRKLTPLPAARRLDLSGWFTVGAGGGDIYHSVSRARPRFLLLCLLLLSVGVGIFLLPAR.

At Ser2 the chain carries N-acetylserine; by host. The tract at residues Ser2–Lys23 is interaction with STAT1. The interaction with EIF2AK2/PKR stretch occupies residues Ser2–Pro58. Residues Ser2–Arg59 form an interaction with DDX3X region. The segment at Ser2–Ser75 is disordered. Residues Ser2–Asn168 lie on the Cytoplasmic side of the membrane. 2 short sequence motifs (nuclear localization signal) span residues Pro5–Arg13 and Pro38–Arg43. A compositionally biased stretch (basic residues) spans Pro7–Asn16. Over residues Gly32–Arg47 the composition is skewed to low complexity. Ser53 is subject to Phosphoserine; by host. Short sequence motifs (nuclear localization signal) lie at residues Pro58 to Pro64 and Pro66 to Ser71. 2 positions are modified to phosphoserine; by host: Ser99 and Ser116. The interval Pro112–Ala152 is important for endoplasmic reticulum and mitochondrial localization. An interaction with APOA2 region spans residues Val122–Ser173. An important for lipid droplets localization region spans residues Tyr164–Gly167. Residues Leu169–Val189 traverse the membrane as a helical segment. Positions Leu178 to Ala191 are cleaved as a propeptide — ER anchor for the core protein, removed in mature form by host signal peptidase. Over Ser190–Gly358 the chain is Lumenal. N-linked (GlcNAc...) asparagine; by host glycans are attached at residues Asn196, Asn209, and Asn234. An important for fusion region spans residues Ile265 to Gln296. Asn305 is a glycosylation site (N-linked (GlcNAc...) asparagine; by host). Residues Leu359–Ala379 form a helical membrane-spanning segment. At Gly380–Leu729 the chain is on the lumenal side. Residues Thr385–Gln412 are HVR1. Asn417, Asn423, and Asn430 each carry an N-linked (GlcNAc...) (high mannose) asparagine; by host glycan. 4 cysteine pairs are disulfide-bonded: Cys429–Cys554, Cys452–Cys459, Cys488–Cys496, and Cys505–Cys510. N-linked (GlcNAc...) asparagine; by host glycosylation occurs at Asn448. Residues Glu475–Asn480 are HVR2. Asn477 carries N-linked (GlcNAc...) asparagine; by host glycosylation. The CD81-binding 1 stretch occupies residues Asp482–Pro495. A glycan (N-linked (GlcNAc...) asparagine; by host) is linked at Asn534. The segment at Pro546–Gly553 is CD81-binding 2. Asn558 carries an N-linked (GlcNAc...) asparagine; by host glycan. Intrachain disulfides connect Cys566–Cys571, Cys585–Cys589, Cys601–Cys624, and Cys611–Cys648. Residues Asn627 and Asn649 are each glycosylated (N-linked (GlcNAc...) (high mannose) asparagine; by host). Cysteines 656 and 681 form a disulfide. Residues Ser664–Glu675 are PKR/eIF2-alpha phosphorylation homology domain (PePHD). A helical membrane pass occupies residues Leu730 to Ala750. Over Ala751–Ala761 the chain is Lumenal. Residues Ser762–Ile782 form a helical membrane-spanning segment. The Cytoplasmic portion of the chain corresponds to Lys783–Val786. The chain crosses the membrane as a helical span at residues Thr787–Leu807. The Lumenal portion of the chain corresponds to Pro808–Thr817. The chain crosses the membrane as a helical span at residues Glu818–Ala838. Residues Tyr839–Cys885 lie on the Cytoplasmic side of the membrane. The chain crosses the membrane as a helical span at residues Pro886–Leu906. In terms of domain architecture, Peptidase C18 spans Gly903–Leu1030. The Lumenal portion of the chain corresponds to Arg907–Leu932. Positions Ser908–Arg1210 are protease NS2-3. Cys926 is lipidated: S-palmitoyl cysteine; by host. Residues Ser933–Ile953 form a helical membrane-spanning segment. The interaction with host SCPS1 stretch occupies residues Ser933–Ile953. Residues Tyr954 to Thr1661 are Cytoplasmic-facing. Catalysis depends on for protease NS2 activity; shared with dimeric partner residues His956, Glu976, and Cys997. Residues Ala1031–Pro1212 form the Peptidase S29 domain. Residues His1087 and Asp1111 each act as charge relay system; for serine protease NS3 activity in the active site. Zn(2+) is bound by residues Cys1127 and Cys1129. Ser1169 acts as the Charge relay system; for serine protease NS3 activity in catalysis. Residues Cys1175 and His1179 each contribute to the Zn(2+) site. One can recognise a Helicase ATP-binding domain in the interval Pro1221–His1373. Position 1234–1241 (Ala1234–Ser1241) interacts with ATP. Mg(2+) is bound by residues Ser1241 and Glu1321. The short motif at Asp1320 to His1323 is the DECH box element. Positions Gln1490–Ile1502 are RNA-binding. The helical transmembrane segment at Ser1662–Gly1682 threads the bilayer. The interval Cys1683–Gln1694 is NS3-binding. The Cytoplasmic portion of the chain corresponds to Cys1683–Thr1809. Residues Thr1810 to Ala1830 traverse the membrane as a helical segment. Residues Thr1831–Gly1832 are Lumenal-facing. Residues Phe1833–Val1853 form a helical membrane-spanning segment. Position 1854 (Asp1854) is a topological domain, cytoplasmic. A helical transmembrane segment spans residues Val1855 to Gly1875. At Glu1876–Asn1885 the chain is on the lumenal side. The helical transmembrane segment at Leu1886 to Leu1906 threads the bilayer. The Cytoplasmic segment spans residues Arg1907–Cys1976. A lipid anchor (S-palmitoyl cysteine; by host) is attached at Cys1976. An intramembrane segment occupies Ala1977 to Met2007. The Cytoplasmic portion of the chain corresponds to Pro2008–Arg3012. Cys2015, Cys2033, Cys2035, and Cys2056 together coordinate Zn(2+). Positions Glu2124–Ala2212 are FKBP8-binding. The interval Glu2124–Ala2332 is transcriptional activation. The tract at residues Pro2139–Pro2143 is interaction with non-structural protein 4A. A disordered region spans residues Arg2193 to Ala2212. Residues Arg2193–Glu2460 are interaction with host SKP2. Ser2198, Ser2201, Ser2205, Ser2208, Ser2211, and Ser2214 each carry phosphoserine; by host. Low complexity predominate over residues Ser2198 to Ala2212. The ISDR stretch occupies residues Ser2214–Lys2249. An interaction with EIF2AK2/PKR region spans residues Ser2214 to Leu2275. The segment at Lys2249 to Tyr2306 is NS4B-binding. A V3 region spans residues Glu2299–Pro2376. The disordered stretch occupies residues Pro2308–Arg2328. The SH3-binding motif lies at Ala2322 to Pro2325. The Nuclear localization signal motif lies at Pro2327–Leu2335. Lys2350 participates in a covalent cross-link: Glycyl lysine isopeptide (Lys-Gly) (interchain with G-Cter in ubiquitin). The tract at residues Gly2353–Thr2431 is disordered. The span at Ser2361–Thr2373 shows a compositional bias: polar residues. Ser2471 and Ser2484 each carry phosphoserine; by host. Residues Pro2656 to Asp2774 enclose the RdRp catalytic domain. Residues Asp2662, Asp2760, and Asp2761 each contribute to the Mg(2+) site. Residues Phe3013–Arg3033 form a helical membrane-spanning segment.

Belongs to the hepacivirus polyprotein family. In terms of assembly, homooligomer. Interacts with E1 (via C-terminus). Interacts with the non-structural protein 5A. Interacts (via N-terminus) with host STAT1 (via SH2 domain); this interaction results in decreased STAT1 phosphorylation and ubiquitin-mediated proteasome-dependent STAT1 degradation, leading to decreased IFN-stimulated gene transcription. Interacts with host STAT3; this interaction constitutively activates STAT3. Interacts with host LTBR receptor. Interacts with host TNFRSF1A receptor and possibly induces apoptosis. Interacts with host HNRPK. Interacts with host YWHAE. Interacts with host UBE3A/E6AP. Interacts with host DDX3X. Interacts with host APOA2. Interacts with host RXRA protein. Interacts with host SP110 isoform 3/Sp110b; this interaction sequesters the transcriptional corepressor SP110 away from the nucleus. Interacts with host CREB3 nuclear transcription protein; this interaction triggers cell transformation. Interacts with host ACY3. Interacts with host C1QR1. Interacts with host RBM24; this interaction, which enhances the interaction of the mature core protein with 5'-UTR, may inhibit viral translation and favor replication. Interacts with host EIF2AK2/PKR; this interaction induces the autophosphorylation of EIF2AK2. Part of the viral assembly initiation complex composed of NS2, E1, E2, NS3, NS4A, NS5A and the mature core protein. As to quaternary structure, forms a heterodimer with envelope glycoprotein E2. Interacts with mature core protein. Interacts with protease NS2. The heterodimer E1/E2 interacts with host CLDN1; this interaction plays a role in viral entry into host cell. Interacts with host SPSB2 (via C-terminus). Part of the viral assembly initiation complex composed of NS2, E1, E2, NS3, NS4A, NS5A and the mature core protein. Interacts with host NEURL3; this interaction prevents E1 binding to glycoprotein E2. Forms a heterodimer with envelope glycoprotein E1. Interacts with host CD81 and SCARB1 receptors; these interactions play a role in viral entry into host cell. Interacts with host EIF2AK2/PKR; this interaction inhibits EIF2AK2 and probably allows the virus to evade the innate immune response. Interacts with host CD209/DC-SIGN and CLEC4M/DC-SIGNR. Interact with host SPCS1; this interaction is essential for viral particle assembly. Interacts with protease NS2. The heterodimer E1/E2 interacts with host CLDN1; this interaction plays a role in viral entry into host cell. Part of the viral assembly initiation complex composed of NS2, E1, E2, NS3, NS4A, NS5A and the mature core protein. Interacts with host SLC3A2/4F2hc; the interaction may facilitate viral entry into host cell. Interacts with human PLSCR1. In terms of assembly, homohexamer. Homoheptamer. Interacts with protease NS2. As to quaternary structure, homodimer. Interacts with host SPCS1; this interaction is essential for viral particle assembly. Interacts with envelope glycoprotein E1. Interacts with envelope glycoprotein E2. Interacts with viroporin p7. Interacts with serine protease/helicase NS3. Part of the replication complex composed of NS2, NS3, NS4A, NS4B, NS5A and the RNA-directed RNA polymerase embedded in an ER-derived membranous web. Part of the viral assembly initiation complex composed of NS2, E1, E2, NS3, NS4A, NS5A and the mature core protein. Interacts with protease NS2. Interacts with non-structural protein 4A; this interaction stabilizes the folding of NS3 serine protease. NS3-NS4A interaction is essential for NS3 activation and allows membrane anchorage of the latter. NS3/NS4A complex also prevents phosphorylation of host IRF3, thus preventing the establishment of dsRNA induced antiviral state. Interacts with host MAVS; this interaction leads to the cleavage and inhibition of host MAVS. Interacts with host TICAM1; this interaction leads to the cleavage and inhibition of host TICAM1. Interacts with host TANK-binding kinase/TBK1; this interaction results in the inhibition of the association between TBK1 and IRF3, which leads to the inhibition of IRF3 activation. Interacts with host RBM24. Part of the replication complex composed of NS2, NS3, NS4A, NS4B, NS5A and the RNA-directed RNA polymerase embedded in an ER-derived membranous web. Part of the viral assembly initiation complex composed of NS2, E1, E2, NS3, NS4A, NS5A and the mature core protein. In terms of assembly, interacts with NS3 serine protease; this interaction stabilizes the folding of NS3 serine protease. NS3-NS4A interaction is essential for NS3 activation and allows membrane anchorage of the latter. Interacts with non-structural protein 5A (via N-terminus). Part of the replication complex composed of NS2, NS3, NS4A, NS4B, NS5A and the RNA-directed RNA polymerase embedded in an ER-derived membranous web. Part of the viral assembly initiation complex composed of NS2, E1, E2, NS3, NS4A, NS5A and the mature core protein. As to quaternary structure, homomultimer. Interacts with non-structural protein NS5A. Interacts with host PLA2G4C; this interaction likely initiates the recruitment of replication complexes to lipid droplets. Interacts with host STING; this interaction disrupts the interaction between STING and TBK1 thereby suppressing the interferon signaling. Part of the replication complex composed of NS2, NS3, NS4A, NS4B, NS5A and the RNA-directed RNA polymerase embedded in an ER-derived membranous web. Monomer. Homodimer; dimerization is required for RNA-binding. Interacts with the mature core protein. Interacts (via N-terminus) with non-structural protein 4A. Interacts with non-structural protein 4B. Interacts (via region D2) with RNA-directed RNA polymerase. Part of the viral assembly initiation complex composed of NS2, E1, E2, NS3, NS4A, NS5A and the mature core protein. Part of the replication complex composed of NS2, NS3, NS4A, NS4B, NS5A and the RNA-directed RNA polymerase embedded in an ER-derived membranous web. Interacts with host GRB2. Interacts with host BIN1. Interacts with host PIK3R1. Interacts with host SRCAP. Interacts with host FKBP8. Interacts (via C-terminus) with host VAPB (via MSP domain). Interacts with host EIF2AK2/PKR; this interaction leads to disruption of EIF2AK2 dimerization by NS5A and probably allows the virus to evade the innate immune response. Interacts (via N-terminus) with host PACSIN2 (via N-terminus); this interaction attenuates protein kinase C alpha-mediated phosphorylation of PACSIN2 by disrupting the interaction between PACSIN2 and PRKCA. Interacts (via N-terminus) with host SRC kinase (via SH2 domain). Interacts with most Src-family kinases. Interacts with host IFI27 and SKP2; promotes the ubiquitin-mediated proteasomal degradation of NS5A. Interacts with host GPS2. Interacts with host TNFRSF21; this interaction allows the modulation by the virus of JNK, p38 MAPK, STAT3, and Akt signaling pathways in a DR6-dependent manner. Interacts (via N-terminus) with host CIDEB (via N-terminus); this interaction seems to regulate the association of HCV particles with APOE. Interacts with host CHKA/Choline Kinase-alpha; CHKA bridges host PI4KA and NS5A and potentiates NS5A-stimulated PI4KA activity, which then facilitates the targeting of the ternary complex to the ER for viral replication. Interacts with host SPSB2 (via C-terminus); this interaction targets NS5A for ubiquitination and degradation. Interacts with host RAB18; this interaction may promote the association of NS5A and other replicase components with lipid droplets. Interacts (via region D2) with host PPIA/CYPA; the interaction stimulates RNA-binding ability of NS5A and is dependent on the peptidyl-prolyl cis-trans isomerase activity of PPIA/CYPA. Interacts with host TRIM14; this interaction induces the degradation of NS5A. In terms of assembly, homooligomer. Interacts with non-structural protein 5A. Interacts with host VAPB. Interacts with host PRK2/PKN2. Interacts with host HNRNPA1 and SEPT6; these interactions facilitate viral replication. Part of the replication complex composed of NS2, NS3, NS4A, NS4B, NS5A and the RNA-directed RNA polymerase. The cofactor is Zn(2+). Requires Mg(2+) as cofactor. Specific enzymatic cleavages in vivo yield mature proteins. The structural proteins, core, E1, E2 and p7 are produced by proteolytic processing by host signal peptidases. The core protein precursor is synthesized as a 23 kDa, which is retained in the ER membrane through the hydrophobic signal peptide. Cleavage by the signal peptidase releases the 21 kDa mature core protein. The cleavage of the core protein precursor occurs between aminoacids 176 and 188 but the exact cleavage site is not known. Some degraded forms of the core protein appear as well during the course of infection. The other proteins (p7, NS2, NS3, NS4A, NS4B, NS5A and NS5B) are cleaved by the viral proteases. Autoprocessing between NS2 and NS3 is mediated by the NS2 cysteine protease catalytic domain and regulated by the NS3 N-terminal domain. Post-translationally, phosphorylated by host PKC and PKA. In terms of processing, ubiquitinated; mediated by UBE3A and leading to core protein subsequent proteasomal degradation. Highly N-glycosylated. Post-translationally, palmitoylation is required for NS2/3 autoprocessing and E2 recruitment to membranes. In terms of processing, palmitoylated. This modification may play a role in its polymerization or in protein-protein interactions. Phosphorylated on serines in a basal form termed p56. p58 is a hyperphosphorylated form of p56. p56 and p58 coexist in the cell in roughly equivalent amounts. Hyperphosphorylation is dependent on the presence of NS4A. Host CSNK1A1/CKI-alpha or RPS6KB1 kinases may be responsible for NS5A phosphorylation. Post-translationally, tyrosine phosphorylation is essential for the interaction with host SRC. In terms of processing, ubiquitinated. Ubiquitination, most probably at Lys-2350, mediated by host IFI27 and SKP2 leads to proteasomal degradation, restricting viral infection. Ubiquitination by host TRIM22 leads to interruption of viral replication. The N-terminus is phosphorylated by host PRK2/PKN2.

Its subcellular location is the host endoplasmic reticulum membrane. It localises to the host mitochondrion membrane. The protein localises to the virion. The protein resides in the host cytoplasm. It is found in the host nucleus. Its subcellular location is the host lipid droplet. It localises to the virion membrane. The protein localises to the host mitochondrion. The protein resides in the host cell membrane. It is found in the host perinuclear region. It carries out the reaction Hydrolysis of four peptide bonds in the viral precursor polyprotein, commonly with Asp or Glu in the P6 position, Cys or Thr in P1 and Ser or Ala in P1'.. The catalysed reaction is a ribonucleoside 5'-triphosphate + H2O = a ribonucleoside 5'-diphosphate + phosphate + H(+). The enzyme catalyses ATP + H2O = ADP + phosphate + H(+). It catalyses the reaction RNA(n) + a ribonucleoside 5'-triphosphate = RNA(n+1) + diphosphate. Inhibited by the antiviral drug hexamethylene amiloride. Inhibition by amantadine appears to be genotype-dependent. Also inhibited by long-alkyl-chain iminosugar derivatives. Its activity is regulated as follows. Activity is up-regulated by PRK2/PKN2-mediated phosphorylation. Packages viral RNA to form a viral nucleocapsid, and promotes virion budding. Participates in the viral particle production as a result of its interaction with the non-structural protein 5A. Binds RNA and may function as a RNA chaperone to induce the RNA structural rearrangements taking place during virus replication. Modulates viral translation initiation by interacting with viral IRES and 40S ribosomal subunit. Affects various cell signaling pathways, host immunity and lipid metabolism. Prevents the establishment of cellular antiviral state by blocking the interferon-alpha/beta (IFN-alpha/beta) and IFN-gamma signaling pathways and by blocking the formation of phosphorylated STAT1 and promoting ubiquitin-mediated proteasome-dependent degradation of STAT1. Activates STAT3 leading to cellular transformation. Regulates the activity of cellular genes, including c-myc and c-fos. May repress the promoter of p53, and sequester CREB3 and SP110 isoform 3/Sp110b in the cytoplasm. Represses cell cycle negative regulating factor CDKN1A, thereby interrupting an important check point of normal cell cycle regulation. Targets transcription factors involved in the regulation of inflammatory responses and in the immune response: suppresses TNF-induced NF-kappa-B activation, and activates AP-1. Binds to dendritic cells (DCs) via C1QR1, resulting in down-regulation of T-lymphocytes proliferation. Alters lipid metabolism by interacting with hepatocellular proteins involved in lipid accumulation and storage. Induces up-regulation of FAS promoter activity, and thereby contributes to the increased triglyceride accumulation in hepatocytes (steatosis). Functionally, forms a heterodimer with envelope glycoprotein E2, which mediates virus attachment to the host cell, virion internalization through clathrin-dependent endocytosis and fusion with host membrane. Fusion with the host cell is most likely mediated by both E1 and E2, through conformational rearrangements of the heterodimer required for fusion rather than a classical class II fusion mechanism. E1/E2 heterodimer binds host apolipoproteins such as APOB and ApoE thereby forming a lipo-viro-particle (LVP). APOE associated to the LVP allows the initial virus attachment to cell surface receptors such as the heparan sulfate proteoglycans (HSPGs), syndecan-1 (SDC1), syndecan-1 (SDC2), the low-density lipoprotein receptor (LDLR) and scavenger receptor class B type I (SCARB1). The cholesterol transfer activity of SCARB1 allows E2 exposure and binding of E2 to SCARB1 and the tetraspanin CD81. E1/E2 heterodimer binding on CD81 activates the epithelial growth factor receptor (EGFR) signaling pathway. Diffusion of the complex E1-E2-EGFR-SCARB1-CD81 to the cell lateral membrane allows further interaction with Claudin 1 (CLDN1) and occludin (OCLN) to finally trigger HCV entry. In terms of biological role, forms a heterodimer with envelope glycoprotein E1, which mediates virus attachment to the host cell, virion internalization through clathrin-dependent endocytosis and fusion with host membrane. Fusion with the host cell is most likely mediated by both E1 and E2, through conformational rearrangements of the heterodimer required for fusion rather than a classical class II fusion mechanism. The interaction between envelope glycoprotein E2 and host apolipoprotein E/APOE allows the proper assembly, maturation and infectivity of the viral particles. This interaction is probably promoted via the up-regulation of cellular autophagy by the virus. E1/E2 heterodimer binds host apolipoproteins such as APOB and APOE thereby forming a lipo-viro-particle (LVP). APOE associated to the LVP allows the initial virus attachment to cell surface receptors such as the heparan sulfate proteoglycans (HSPGs), syndecan-1 (SDC1), syndecan-1 (SDC2), the low-density lipoprotein receptor (LDLR) and scavenger receptor class B type I (SCARB1). The cholesterol transfer activity of SCARB1 allows E2 exposure and binding of E2 to SCARB1 and the tetraspanin CD81. E1/E2 heterodimer binding on CD81 activates the epithelial growth factor receptor (EGFR) signaling pathway. Diffusion of the complex E1-E2-EGFR-SCARB1-CD81 to the cell lateral membrane allows further interaction with Claudin 1 (CLDN1) and occludin (OCLN) to finally trigger HCV entry. Inhibits host EIF2AK2/PKR activation, preventing the establishment of an antiviral state. Viral ligand for CD209/DC-SIGN and CLEC4M/DC-SIGNR, which are respectively found on dendritic cells (DCs), and on liver sinusoidal endothelial cells and macrophage-like cells of lymph node sinuses. These interactions allow the capture of circulating HCV particles by these cells and subsequent facilitated transmission to permissive cells such as hepatocytes and lymphocyte subpopulations. The interaction between E2 and host amino acid transporter complex formed by SLC3A2 and SLC7A5/LAT1 may facilitate viral entry into host cell. Its function is as follows. Ion channel protein that acts as a viroporin and plays an essential role in the assembly, envelopment and secretion of viral particles. Regulates the host cell secretory pathway, which induces the intracellular retention of viral glycoproteins and favors assembly of viral particles. Creates a pore in acidic organelles and releases Ca(2+) and H(+) in the cytoplasm of infected cells, leading to a productive viral infection. High levels of cytoplasmic Ca(2+) may trigger membrane trafficking and transport of viral ER-associated proteins to viroplasms, sites of viral genome replication. This ionic imbalance induces the assembly of the inflammasome complex, which triggers the maturation of pro-IL-1beta into IL-1beta through the action of caspase-1. Targets also host mitochondria and induces mitochondrial depolarization. In addition of its role as a viroporin, acts as a lipid raft adhesion factor. Cysteine protease required for the proteolytic auto-cleavage between the non-structural proteins NS2 and NS3. The N-terminus of NS3 is required for the function of NS2 protease (active region NS2-3). Promotes the initiation of viral particle assembly by mediating the interaction between structural and non-structural proteins. Functionally, displays three enzymatic activities: serine protease with a chymotrypsin-like fold, NTPase and RNA helicase. NS3 serine protease, in association with NS4A, is responsible for the cleavages of NS3-NS4A, NS4A-NS4B, NS4B-NS5A and NS5A-NS5B. The NS3/NS4A complex prevents phosphorylation of host IRF3, thus preventing the establishment of dsRNA induced antiviral state. The NS3/NS4A complex induces host amino acid transporter component SLC3A2, thus contributing to HCV propagation. NS3 RNA helicase binds to RNA and unwinds both dsDNA and dsRNA in the 3' to 5' direction, and likely resolves RNA complicated stable secondary structures in the template strand. Binds a single ATP and catalyzes the unzipping of a single base pair of dsRNA. Inhibits host antiviral proteins TBK1 and IRF3 thereby preventing the establishment of an antiviral state. Cleaves host MAVS/CARDIF thereby preventing the establishment of an antiviral state. Cleaves host TICAM1/TRIF, thereby disrupting TLR3 signaling and preventing the establishment of an antiviral state. In terms of biological role, peptide cofactor which forms a non-covalent complex with the N-terminal of NS3 serine protease. The NS3/NS4A complex prevents phosphorylation of host IRF3, thus preventing the establishment of dsRNA induced antiviral state. The NS3/NS4A complex induces host amino acid transporter component SLC3A2, thus contributing to HCV propagation. Its function is as follows. Induces a specific membrane alteration that serves as a scaffold for the virus replication complex. This membrane alteration gives rise to the so-called ER-derived membranous web that contains the replication complex. NS4B self-interaction contributes to its function in membranous web formation. Promotes host TRIF protein degradation in a CASP8-dependent manner thereby inhibiting host TLR3-mediated interferon signaling. Disrupts the interaction between STING and TBK1 contributing to the inhibition of interferon signaling. Phosphorylated protein that is indispensable for viral replication and assembly. Both hypo- and hyperphosphorylated states are required for the viral life cycle. The hyperphosphorylated form of NS5A is an inhibitor of viral replication. Involved in RNA-binding and especially in binding to the viral genome. Zinc is essential for RNA-binding. Participates in the viral particle production as a result of its interaction with the mature viral core protein. Its interaction with host VAPB may target the viral replication complex to vesicles. Down-regulates viral IRES translation initiation. Mediates interferon resistance, presumably by interacting with and inhibiting host EIF2AK2/PKR. Prevents BIN1-induced apoptosis. Acts as a transcriptional activator of some host genes important for viral replication when localized in the nucleus. Via the interaction with host PACSIN2, modulates lipid droplet formation in order to promote virion assembly. Modulates TNFRSF21/DR6 signaling pathway for viral propagation. Functionally, RNA-dependent RNA polymerase that performs primer-template recognition and RNA synthesis during viral replication. Initiates RNA transcription/replication at a flavin adenine dinucleotide (FAD), resulting in a 5'- FAD cap on viral RNAs. In this way, recognition of viral 5' RNA by host pattern recognition receptors can be bypassed, thereby evading activation of antiviral pathways. The protein is Genome polyprotein of Hepatitis C virus genotype 2k (isolate VAT96) (HCV).